The chain runs to 633 residues: GTPase-activating protein GYP3 (633 aa).

The tract at residues 26-127 (AFTVKSPSVP…HSDDLDLVPD (102 aa)) is disordered. Basic and acidic residues predominate over residues 37–47 (FHDKMHSDHSS). The segment covering 99 to 115 (GEDDDDNNGDNGNEDLE) has biased composition (acidic residues). The residue at position 147 (Ser147) is a Phosphoserine. The Rab-GAP TBC domain occupies 223–456 (GIPAEWRGNA…RIWDCLFYEE (234 aa)). The residue at position 484 (Ser484) is a Phosphoserine.

The protein localises to the cytoplasm. The protein resides in the bud. It is found in the bud neck. Its function is as follows. Regulates exocytosis by functioning as a GAP for SEC4. Stimulates specifically the GTPase activity of YPT6. Also required for efficient polarization of the actin patches. In Saccharomyces cerevisiae (strain ATCC 204508 / S288c) (Baker's yeast), this protein is GTPase-activating protein GYP3 (MSB3).